The chain runs to 167 residues: D-aminoacyl-tRNA deacylase 2 (167 aa).

The Gly-transPro motif, allows the protein to recognize chirality of D-amino acids signature appears at 159-160; it reads GP.

The protein belongs to the DTD family. As to quaternary structure, homodimer.

It localises to the cytoplasm. It carries out the reaction a D-aminoacyl-tRNA + H2O = a tRNA + a D-alpha-amino acid + H(+). It catalyses the reaction glycyl-tRNA(Ala) + H2O = tRNA(Ala) + glycine + H(+). The catalysed reaction is D-tyrosyl-tRNA(Tyr) + H2O = D-tyrosine + tRNA(Tyr). The enzyme catalyses L-alanyl-tRNA(Thr) + H2O = tRNA(Thr) + L-alanine + H(+). In terms of biological role, deacylates mischarged D-aminoacyl-tRNAs. Also deacylates mischarged glycyl-tRNA(Ala), protecting cells against glycine mischarging by AlaRS. Probably acts by rejecting L-amino acids from its binding site rather than specific recognition of D-amino acids. Catalyzes the hydrolysis of D-tyrosyl-tRNA(Tyr), has no activity on correctly charged L-tyrosyl-tRNA(Tyr). By recycling D-aminoacyl-tRNA to D-amino acids and free tRNA molecules, this enzyme counteracts the toxicity associated with the formation of D-aminoacyl-tRNA entities in vivo and helps enforce protein L-homochirality. In contrast to DTD1, deacylates L-Ala mischarged on tRNA(Thr)(G4.U69) by alanine-tRNA ligase AARS. Can deacylate L-Ala due to a relaxed specificity for substrate chirality caused by the trans conformation of the Gly-Pro motif in the active site. Also hydrolyzes correctly charged, achiral, glycyl-tRNA(Gly) in vitro, although in vivo EEF1A1/EF-Tu may protect cognate achiral glycyl-tRNA(Gly) from DTD2-mediated deacetylation. The protein is D-aminoacyl-tRNA deacylase 2 (DTD2) of Gallus gallus (Chicken).